We begin with the raw amino-acid sequence, 924 residues long: Ubiquitin carboxyl-terminal hydrolase 5 (924 aa).

Positions 15–145 constitute a DUSP domain; the sequence is LSPEEERVFI…GPTLARRVIS (131 aa). Positions 64–83 are enriched in polar residues; that stretch reads TNDGSSLSEHCDSPGSSTLK. The interval 64–87 is disordered; that stretch reads TNDGSSLSEHCDSPGSSTLKKPSR. The USP domain maps to 317 to 916; the sequence is TGLLNLGNTC…AAYVLFYRRK (600 aa). C326 acts as the Nucleophile in catalysis. Positions 648–667 are enriched in basic and acidic residues; sequence REESVGKKGNSDSSIPERRS. The segment at 648–690 is disordered; it reads REESVGKKGNSDSSIPERRSARFNNTEEEDKVGGLKKAKKSNS. Catalysis depends on H874, which acts as the Proton acceptor.

This sequence belongs to the peptidase C19 family.

It catalyses the reaction Thiol-dependent hydrolysis of ester, thioester, amide, peptide and isopeptide bonds formed by the C-terminal Gly of ubiquitin (a 76-residue protein attached to proteins as an intracellular targeting signal).. In terms of biological role, recognizes and hydrolyzes the peptide bond at the C-terminal Gly of ubiquitin. Involved in the processing of poly-ubiquitin precursors as well as that of ubiquitinated proteins. The polypeptide is Ubiquitin carboxyl-terminal hydrolase 5 (UBP5) (Arabidopsis thaliana (Mouse-ear cress)).